The chain runs to 317 residues: L-lactate dehydrogenase (317 aa).

Residues Val17, Asp38, Lys43, Tyr69, and 83-84 each bind NAD(+); that span reads GA. Substrate is bound by residues Gln86 and Arg92. NAD(+) is bound by residues Ser105, 122 to 124, and Ser147; that span reads ATN. 124 to 127 provides a ligand contact to substrate; the sequence is NPVD. 152 to 155 is a substrate binding site; it reads DTAR. Residues Arg157 and His172 each contribute to the beta-D-fructose 1,6-bisphosphate site. His179 acts as the Proton acceptor in catalysis. Tyr224 bears the Phosphotyrosine mark. Position 233 (Thr233) interacts with substrate.

It belongs to the LDH/MDH superfamily. LDH family. Homotetramer.

The protein localises to the cytoplasm. It carries out the reaction (S)-lactate + NAD(+) = pyruvate + NADH + H(+). The protein operates within fermentation; pyruvate fermentation to lactate; (S)-lactate from pyruvate: step 1/1. Allosterically activated by fructose 1,6-bisphosphate (FBP). In terms of biological role, catalyzes the conversion of lactate to pyruvate. This chain is L-lactate dehydrogenase, found in Bacillus caldolyticus.